The primary structure comprises 540 residues: Tyrosine-protein kinase transforming protein erbB (540 aa).

The region spanning 132 to 399 (FKKVKVLGFG…KMARDPPRYL (268 aa)) is the Protein kinase domain. Residues 138–146 (LGFGAFGTV) and Lys165 each bind ATP. Residue Asp257 is the Proton acceptor of the active site.

This sequence belongs to the protein kinase superfamily. Tyr protein kinase family. EGF receptor subfamily.

It carries out the reaction L-tyrosyl-[protein] + ATP = O-phospho-L-tyrosyl-[protein] + ADP + H(+). This is Tyrosine-protein kinase transforming protein erbB (V-ERBB) from Avian erythroblastosis virus (strain ts167).